The primary structure comprises 95 residues: Putative monooxygenase YcnE (95 aa).

One can recognise an ABM domain in the interval 2-93 (IVLQAYIKVK…APLDVVRTEL (92 aa)). Serine 24 bears the Phosphoserine mark.

It belongs to the LsrG family.

Its function is as follows. Putative monooxygenase that may contribute to the degradation of aromatic compounds. The polypeptide is Putative monooxygenase YcnE (ycnE) (Bacillus subtilis (strain 168)).